Reading from the N-terminus, the 479-residue chain is Glucan 1,3-beta-glucosidase 2 (479 aa).

An N-terminal signal peptide occupies residues 1–21; it reads MMLFLIHLMALCCMFVAEVAC. Asparagine 25, asparagine 29, asparagine 63, asparagine 104, asparagine 187, and asparagine 193 each carry an N-linked (GlcNAc...) asparagine glycan. Catalysis depends on glutamate 227, which acts as the Proton donor. N-linked (GlcNAc...) asparagine glycans are attached at residues asparagine 254, asparagine 285, and asparagine 288. Histidine 306 functions as the Nucleophile in the catalytic mechanism. N-linked (GlcNAc...) asparagine glycosylation is found at asparagine 318 and asparagine 451. Residue serine 456 is the site of GPI-anchor amidated serine attachment. The propeptide at 457–479 is removed in mature form; it reads SASAIASNKMTLLLAFLLVILVI.

Belongs to the glycosyl hydrolase 5 (cellulase A) family. In terms of processing, predicted to be a substrate for cleavage by KEX2.

It is found in the cell membrane. It localises to the secreted. The enzyme catalyses Successive hydrolysis of beta-D-glucose units from the non-reducing ends of (1-&gt;3)-beta-D-glucans, releasing alpha-glucose.. Beta-glucanases participate in the metabolism of beta-glucan, the main structural component of the cell wall. EXG2 is not heavily involved in the exoglucanase function of the adhesion process. This chain is Glucan 1,3-beta-glucosidase 2 (EXG2), found in Candida albicans (strain SC5314 / ATCC MYA-2876) (Yeast).